A 1191-amino-acid polypeptide reads, in one-letter code: DNA-directed RNA polymerase subunit beta (1191 aa).

Positions 1164-1191 (EEEDLQPADALNIAPQPDTEEEPVESFE) are disordered. Positions 1181-1191 (DTEEEPVESFE) are enriched in acidic residues.

The protein belongs to the RNA polymerase beta chain family. As to quaternary structure, the RNAP catalytic core consists of 2 alpha, 1 beta, 1 beta' and 1 omega subunit. When a sigma factor is associated with the core the holoenzyme is formed, which can initiate transcription.

The catalysed reaction is RNA(n) + a ribonucleoside 5'-triphosphate = RNA(n+1) + diphosphate. Its function is as follows. DNA-dependent RNA polymerase catalyzes the transcription of DNA into RNA using the four ribonucleoside triphosphates as substrates. The protein is DNA-directed RNA polymerase subunit beta of Lysinibacillus sphaericus (strain C3-41).